A 105-amino-acid chain; its full sequence is Large ribosomal subunit protein uL24 (105 aa).

Belongs to the universal ribosomal protein uL24 family. In terms of assembly, part of the 50S ribosomal subunit.

In terms of biological role, one of two assembly initiator proteins, it binds directly to the 5'-end of the 23S rRNA, where it nucleates assembly of the 50S subunit. Functionally, one of the proteins that surrounds the polypeptide exit tunnel on the outside of the subunit. This is Large ribosomal subunit protein uL24 from Nitrosomonas europaea (strain ATCC 19718 / CIP 103999 / KCTC 2705 / NBRC 14298).